A 122-amino-acid chain; its full sequence is Small ribosomal subunit protein uS13 (122 aa).

Residues 97–122 are disordered; sequence PVRGQRTHTNARTRKGPAKAIAGKKK.

This sequence belongs to the universal ribosomal protein uS13 family. In terms of assembly, part of the 30S ribosomal subunit. Forms a loose heterodimer with protein S19. Forms two bridges to the 50S subunit in the 70S ribosome.

Its function is as follows. Located at the top of the head of the 30S subunit, it contacts several helices of the 16S rRNA. In the 70S ribosome it contacts the 23S rRNA (bridge B1a) and protein L5 of the 50S subunit (bridge B1b), connecting the 2 subunits; these bridges are implicated in subunit movement. Contacts the tRNAs in the A and P-sites. The protein is Small ribosomal subunit protein uS13 of Rhizobium rhizogenes (strain K84 / ATCC BAA-868) (Agrobacterium radiobacter).